The chain runs to 556 residues: MNHSEALTEQVFSFASELYAYGVREVVISPGSRSTPLALAFEAHPNIKTWIHPDERSAAFFALGLIKGSEKPVAILCTSGTAAANYTPAIAESQISRLPLVVLTSDRPHELRSVGAPQAINQVNMFSNYVNFQFDLPIADGSEHTIDTINYQMQIASQYLYGPHRGPIHFNLPFREPLTPDLDRVDLLTSVTKTLPHYQKSISVDDIKDILQEKNGLIIVGDMQHQAVDQILTYSTIYDLPILADPLSQLRKEKHPNVITTYDLLYRAGLNLEVDYVIRVGKPVISKKLNQWLKKTDAYQIIVQNNDQIDVFPTPPHISYEISANDFFRSLMEEPLVERKKWLQQWQSLEQQARIEISDYLKHATDEAAYVGSLIQKLTKEDTLFVGNSMPIRDVDNLLFDSEASVYANRGANGIDGVVSTALGMAAHKNVILLIGDLSFYHDMNGLLMAKLNELHINIVLVNNNGGGIFSYLPQKRSATKYFERLFGTPTGLNFEYTALLYDFTFKRFDNLTDFKYAELSKMGSHMYEVITNRDENLHQHQNLYQKLSEIVNVTL.

Belongs to the TPP enzyme family. MenD subfamily. As to quaternary structure, homodimer. The cofactor is Mg(2+). It depends on Mn(2+) as a cofactor. Requires thiamine diphosphate as cofactor.

It catalyses the reaction isochorismate + 2-oxoglutarate + H(+) = 5-enolpyruvoyl-6-hydroxy-2-succinyl-cyclohex-3-ene-1-carboxylate + CO2. It participates in quinol/quinone metabolism; 1,4-dihydroxy-2-naphthoate biosynthesis; 1,4-dihydroxy-2-naphthoate from chorismate: step 2/7. It functions in the pathway quinol/quinone metabolism; menaquinone biosynthesis. Catalyzes the thiamine diphosphate-dependent decarboxylation of 2-oxoglutarate and the subsequent addition of the resulting succinic semialdehyde-thiamine pyrophosphate anion to isochorismate to yield 2-succinyl-5-enolpyruvyl-6-hydroxy-3-cyclohexene-1-carboxylate (SEPHCHC). In Staphylococcus epidermidis (strain ATCC 12228 / FDA PCI 1200), this protein is 2-succinyl-5-enolpyruvyl-6-hydroxy-3-cyclohexene-1-carboxylate synthase.